The sequence spans 459 residues: Cysteine--tRNA ligase (459 aa).

Residue cysteine 28 coordinates Zn(2+). The short motif at 30–40 is the 'HIGH' region element; that stretch reads VTIYDLCHIGH. 3 residues coordinate Zn(2+): cysteine 209, histidine 234, and glutamate 238. The 'KMSKS' region motif lies at 266 to 270; that stretch reads KMSKS. Residue lysine 269 coordinates ATP.

It belongs to the class-I aminoacyl-tRNA synthetase family. Monomer. Zn(2+) serves as cofactor.

The protein resides in the cytoplasm. It carries out the reaction tRNA(Cys) + L-cysteine + ATP = L-cysteinyl-tRNA(Cys) + AMP + diphosphate. This Shewanella baltica (strain OS155 / ATCC BAA-1091) protein is Cysteine--tRNA ligase.